The following is a 485-amino-acid chain: NADH-quinone oxidoreductase subunit N (485 aa).

The next 14 helical transmembrane spans lie at 8 to 28, 35 to 55, 75 to 95, 105 to 125, 127 to 147, 159 to 179, 203 to 223, 235 to 255, 271 to 291, 297 to 317, 326 to 346, 373 to 393, 408 to 427, and 449 to 469; these read LIAL…MLSI, FVNA…LYFV, FYTG…YPWL, FYLL…ASHL, SLFI…GYAF, YTIL…LVYA, LLAG…LVPF, PAPV…GVLM, TVLG…AISQ, LLGY…IAVQ, VGVY…VVSL, AAVM…LGFI, WWLT…YYLR, and AFTA…VLGI.

Belongs to the complex I subunit 2 family. In terms of assembly, NDH-1 is composed of 13 different subunits. Subunits NuoA, H, J, K, L, M, N constitute the membrane sector of the complex.

The protein resides in the cell inner membrane. The catalysed reaction is a quinone + NADH + 5 H(+)(in) = a quinol + NAD(+) + 4 H(+)(out). Its function is as follows. NDH-1 shuttles electrons from NADH, via FMN and iron-sulfur (Fe-S) centers, to quinones in the respiratory chain. The immediate electron acceptor for the enzyme in this species is believed to be ubiquinone. Couples the redox reaction to proton translocation (for every two electrons transferred, four hydrogen ions are translocated across the cytoplasmic membrane), and thus conserves the redox energy in a proton gradient. This is NADH-quinone oxidoreductase subunit N from Erwinia tasmaniensis (strain DSM 17950 / CFBP 7177 / CIP 109463 / NCPPB 4357 / Et1/99).